We begin with the raw amino-acid sequence, 303 residues long: MSKEHTLSQNISRVNFKELQQIIKMGLVQGNLIPAFAGAWLAVVMTNHSFLSSIPQILLMLLGSTLIMGGACALNNYYDQDIDRIMPSKQNRPTVNNRITDQNLLLLSFGMMLVGEICLFLLNIPSGVLGLMGIVGYVSYYSIWSKRHTTWNTVIGSFPGAVPPLIGWVAIEGQISLTAIALFLVVFCWQPIHFYALAIKRKDEYALANIPMLPSVKGFKRTRVSMFIWLIILLPVPLLLINLGVVFVVLATLLNLGWIALGLTTFKKNSDQTKWATQMFIYSLNYLVIFFVLAVIVSLLTLI.

A run of 9 helical transmembrane segments spans residues 25-45, 54-74, 104-124, 125-145, 151-171, 179-199, 227-247, 248-268, and 280-300; these read MGLV…AVVM, IPQI…ACAL, LLLL…LLNI, PSGV…SIWS, WNTV…WVAI, AIAL…ALAI, FIWL…GVVF, VVLA…TFKK, and FIYS…VSLL.

It belongs to the UbiA prenyltransferase family. Protoheme IX farnesyltransferase subfamily. Interacts with CtaA.

The protein resides in the cell membrane. It catalyses the reaction heme b + (2E,6E)-farnesyl diphosphate + H2O = Fe(II)-heme o + diphosphate. It participates in porphyrin-containing compound metabolism; heme O biosynthesis; heme O from protoheme: step 1/1. Its function is as follows. Converts heme B (protoheme IX) to heme O by substitution of the vinyl group on carbon 2 of heme B porphyrin ring with a hydroxyethyl farnesyl side group. This chain is Protoheme IX farnesyltransferase, found in Staphylococcus aureus (strain bovine RF122 / ET3-1).